The sequence spans 523 residues: GMP synthase [glutamine-hydrolyzing] (523 aa).

The Glutamine amidotransferase type-1 domain occupies 8 to 205 (KILILDFGSQ…VVKICGCERN (198 aa)). C85 acts as the Nucleophile in catalysis. Catalysis depends on residues H179 and E181. The GMPS ATP-PPase domain maps to 206-398 (WTPENIIEDA…LGLPAEMLNR (193 aa)). 233–239 (SGGVDSS) lines the ATP pocket.

As to quaternary structure, homodimer.

The catalysed reaction is XMP + L-glutamine + ATP + H2O = GMP + L-glutamate + AMP + diphosphate + 2 H(+). Its pathway is purine metabolism; GMP biosynthesis; GMP from XMP (L-Gln route): step 1/1. In terms of biological role, catalyzes the synthesis of GMP from XMP. This chain is GMP synthase [glutamine-hydrolyzing], found in Pasteurella multocida (strain Pm70).